A 227-amino-acid chain; its full sequence is Cytochrome c oxidase subunit 2 (227 aa).

Residues 1 to 14 (MAYPFQLGLQDATS) lie on the Mitochondrial intermembrane side of the membrane. Residues 15 to 45 (PIMEELMNFHDHTLMIVFLISSLVLYIISLM) form a helical membrane-spanning segment. At 46 to 59 (LTTKLTHTSTMDAQ) the chain is on the mitochondrial matrix side. The chain crosses the membrane as a helical span at residues 60 to 87 (EVETIWTILPAVILILIALPSLRILYMM). At 88-227 (DEINNPVLTV…NFENWSTSMI (140 aa)) the chain is on the mitochondrial intermembrane side. Positions 161, 196, 198, 200, 204, and 207 each coordinate Cu cation. Glu198 provides a ligand contact to Mg(2+).

Belongs to the cytochrome c oxidase subunit 2 family. Component of the cytochrome c oxidase (complex IV, CIV), a multisubunit enzyme composed of 14 subunits. The complex is composed of a catalytic core of 3 subunits MT-CO1, MT-CO2 and MT-CO3, encoded in the mitochondrial DNA, and 11 supernumerary subunits COX4I, COX5A, COX5B, COX6A, COX6B, COX6C, COX7A, COX7B, COX7C, COX8 and NDUFA4, which are encoded in the nuclear genome. The complex exists as a monomer or a dimer and forms supercomplexes (SCs) in the inner mitochondrial membrane with NADH-ubiquinone oxidoreductase (complex I, CI) and ubiquinol-cytochrome c oxidoreductase (cytochrome b-c1 complex, complex III, CIII), resulting in different assemblies (supercomplex SCI(1)III(2)IV(1) and megacomplex MCI(2)III(2)IV(2)). Found in a complex with TMEM177, COA6, COX18, COX20, SCO1 and SCO2. Interacts with TMEM177 in a COX20-dependent manner. Interacts with COX20. Interacts with COX16. Cu cation is required as a cofactor.

Its subcellular location is the mitochondrion inner membrane. The enzyme catalyses 4 Fe(II)-[cytochrome c] + O2 + 8 H(+)(in) = 4 Fe(III)-[cytochrome c] + 2 H2O + 4 H(+)(out). In terms of biological role, component of the cytochrome c oxidase, the last enzyme in the mitochondrial electron transport chain which drives oxidative phosphorylation. The respiratory chain contains 3 multisubunit complexes succinate dehydrogenase (complex II, CII), ubiquinol-cytochrome c oxidoreductase (cytochrome b-c1 complex, complex III, CIII) and cytochrome c oxidase (complex IV, CIV), that cooperate to transfer electrons derived from NADH and succinate to molecular oxygen, creating an electrochemical gradient over the inner membrane that drives transmembrane transport and the ATP synthase. Cytochrome c oxidase is the component of the respiratory chain that catalyzes the reduction of oxygen to water. Electrons originating from reduced cytochrome c in the intermembrane space (IMS) are transferred via the dinuclear copper A center (CU(A)) of subunit 2 and heme A of subunit 1 to the active site in subunit 1, a binuclear center (BNC) formed by heme A3 and copper B (CU(B)). The BNC reduces molecular oxygen to 2 water molecules using 4 electrons from cytochrome c in the IMS and 4 protons from the mitochondrial matrix. The polypeptide is Cytochrome c oxidase subunit 2 (MT-CO2) (Apodemus mystacinus (Broad-toothed field mouse)).